We begin with the raw amino-acid sequence, 582 residues long: Leucine-rich repeat protein SHOC-2 (582 aa).

2 stretches are compositionally biased toward basic and acidic residues: residues 1 to 29 and 36 to 57; these read MSSS…KEAK and KESK…KKES. Residues 1 to 90 are disordered; that stretch reads MSSSLGKEKD…TRKKSSNAEV (90 aa). The RVxF motif; important for interaction with PP1c signature appears at 63–66; sequence GVAF. LRR repeat units lie at residues 101 to 122, 124 to 145, 147 to 169, 170 to 191, 193 to 215, 216 to 237, 239 to 260, 262 to 283, 285 to 307, 308 to 329, 332 to 353, 356 to 377, 380 to 400, 403 to 424, 426 to 448, 449 to 470, 472 to 494, 495 to 516, 518 to 540, and 542 to 563; these read NSMR…VKEL, QLTE…VGCL, NLMT…DNLK, KLRM…VYRL, SLTT…RNLP, RLST…IGEL, NLIT…IGNC, QITN…IGNL, SLNR…AKCS, ALEE…LLSS, KLNS…GPSQ, TIYS…IFSR, VLSK…DFGT, SMVE…VSGL, SLEV…GNLR, KLRE…IAYL, DLQK…GHLT, NLTH…IGTL, NLEE…LALC, and KLSI…IVAG.

The protein belongs to the SHOC2 family. As to quaternary structure, component of the SHOC2-MRAS-PP1c (SMP) complex consisting of SHOC2, GTP-bound M-Ras/MRAS and the catalytic subunit of protein phosphatase 1 (either PPP1CA, PPP1CB or PPP1CC). SHOC2 and PP1c preferably bind M-Ras/MRAS, but they also bind K-Ras/KRAS, N-Ras/NRAS and H-Ras/HRAS; these interactions are GTP-dependent and both SHOC2 and PP1c are required to form a stable complex. Interacts with PP1c in the absence of Ras GTPases. Interacts with M-Ras/MRAS and RAF1. Interacts with ERBIN; disrupts the interaction with RAF1 and Ras, preventing the activation of the Ras signaling pathway. Interacts with LZTR1.

Its subcellular location is the cytoplasm. The protein resides in the nucleus. Core component of the SHOC2-MRAS-PP1c (SMP) holophosphatase complex that regulates activation of the MAPK pathway. Acts as a scaffolding protein in the SMP complex. The SMP complex specifically dephosphorylates the inhibitory phosphorylation at 'Ser-259' of RAF1 kinase, 'Ser-365' of BRAF kinase and 'Ser-214' of ARAF kinase, stimulating their kinase activities. The SMP complex enhances the dephosphorylation activity and substrate specificity of PP1c. The polypeptide is Leucine-rich repeat protein SHOC-2 (Shoc2) (Rattus norvegicus (Rat)).